We begin with the raw amino-acid sequence, 280 residues long: Capsid fiber protein (280 aa).

Belongs to the phi29likevirus major capsid fiber protein family. As to quaternary structure, homotrimer. Forms a super helix coiled coil in the homotrimer.

The protein localises to the virion. In terms of biological role, protein that forms the 55 capsid fibers. These fibers are not always present and may have been lost in some lab strains. They may enhance the attachment of the virions onto the host cell wall. In Bacillus subtilis (Bacteriophage PZA), this protein is Capsid fiber protein (8.5).